A 160-amino-acid polypeptide reads, in one-letter code: Large ribosomal subunit protein eL21A (160 aa).

Lys32 is covalently cross-linked (Glycyl lysine isopeptide (Lys-Gly) (interchain with G-Cter in ubiquitin)).

It belongs to the eukaryotic ribosomal protein eL21 family. Component of the large ribosomal subunit (LSU). Mature yeast ribosomes consist of a small (40S) and a large (60S) subunit. The 40S small subunit contains 1 molecule of ribosomal RNA (18S rRNA) and 33 different proteins (encoded by 57 genes). The large 60S subunit contains 3 rRNA molecules (25S, 5.8S and 5S rRNA) and 46 different proteins (encoded by 81 genes).

The protein resides in the cytoplasm. In terms of biological role, component of the ribosome, a large ribonucleoprotein complex responsible for the synthesis of proteins in the cell. The small ribosomal subunit (SSU) binds messenger RNAs (mRNAs) and translates the encoded message by selecting cognate aminoacyl-transfer RNA (tRNA) molecules. The large subunit (LSU) contains the ribosomal catalytic site termed the peptidyl transferase center (PTC), which catalyzes the formation of peptide bonds, thereby polymerizing the amino acids delivered by tRNAs into a polypeptide chain. The nascent polypeptides leave the ribosome through a tunnel in the LSU and interact with protein factors that function in enzymatic processing, targeting, and the membrane insertion of nascent chains at the exit of the ribosomal tunnel. In Saccharomyces cerevisiae (strain ATCC 204508 / S288c) (Baker's yeast), this protein is Large ribosomal subunit protein eL21A.